Reading from the N-terminus, the 91-residue chain is Small ribosomal subunit protein uS15 (91 aa).

Belongs to the universal ribosomal protein uS15 family. Part of the 30S ribosomal subunit. Forms a bridge to the 50S subunit in the 70S ribosome, contacting the 23S rRNA.

Its function is as follows. One of the primary rRNA binding proteins, it binds directly to 16S rRNA where it helps nucleate assembly of the platform of the 30S subunit by binding and bridging several RNA helices of the 16S rRNA. Functionally, forms an intersubunit bridge (bridge B4) with the 23S rRNA of the 50S subunit in the ribosome. This is Small ribosomal subunit protein uS15 from Rickettsia canadensis (strain McKiel).